The primary structure comprises 87 residues: Large ribosomal subunit protein bL27 (87 aa).

This sequence belongs to the bacterial ribosomal protein bL27 family.

In Stenotrophomonas maltophilia (strain R551-3), this protein is Large ribosomal subunit protein bL27.